Reading from the N-terminus, the 367-residue chain is MAFKLWLLDEETIYEHVFERYTQLEGQSGKLAQDLGIQDRRGGVLEITFEPSGLEGGRKKKRVRRRNKASSVEEDQNVAVDSYHVSVGQSISSLRSSRDNGNSTTGYVLWSTTPFFINWLLYSTSAAPFRLGSQVEVTCGSSCEGHKLELPRLVDLTGADRGKRGILELGAGISGILPVILGNFVDTYVSTDQKGILNKLKDNIMENLSQLTRKRCISRSLRLELPTVEPVGDADITAASLPSKSTLHLEVAALDWEKINLQDKKTHSLHPELSLIGETCSSVYVIAMDVIYNEYLIDPFLKTLKQLKHWLQTTYNLQFHVLVGIHLRSQEVTTLFLEKAIIEYDFTVYDIVDQVIQESRFNFYLIT.

Residues W110, 170-172 (GAG), D192, W256, and M288 contribute to the S-adenosyl-L-methionine site.

Belongs to the class I-like SAM-binding methyltransferase superfamily. RKM5 family.

Its function is as follows. S-adenosyl-L-methionine-dependent protein-lysine N-methyltransferase that monomethylates 60S ribosomal protein L1 (RPL1A and RPL1B) at 'Lys-46'. In Saccharomyces cerevisiae (strain JAY291) (Baker's yeast), this protein is Ribosomal lysine N-methyltransferase 5 (RKM5).